The following is a 208-amino-acid chain: N-(5'-phosphoribosyl)anthranilate isomerase (208 aa).

This sequence belongs to the TrpF family.

The catalysed reaction is N-(5-phospho-beta-D-ribosyl)anthranilate = 1-(2-carboxyphenylamino)-1-deoxy-D-ribulose 5-phosphate. It participates in amino-acid biosynthesis; L-tryptophan biosynthesis; L-tryptophan from chorismate: step 3/5. The polypeptide is N-(5'-phosphoribosyl)anthranilate isomerase (Nitrosospira multiformis (strain ATCC 25196 / NCIMB 11849 / C 71)).